A 490-amino-acid chain; its full sequence is MDNKNFQSKTGFNLENTYLTLPNIFFSEQNPKGSKNPKLIKFNTSLAKELGLNEEILNSDFGLNIFAGNETFPGITPIAQAYAGHQFGHFTMLGDGRALLLGEHVTKDGKRYDVQLKGSGRTIYSRGGDGKAALAPMLREYIISEGMHSLGIPTTRSLAVVSTGEEVLREKFEQGAILTRIASSHIRVGTFAYAAQWGTLEDLKSLADYTIKRHFPNIANSENKYILFLEEVINRQAELIVKWQSVGFIHGVMNTDNMVISGETIDYGPCAFMDTYDTNTVFSSIDYAGRYAYGNQPNMALWNLARFSEALLPLLNPNLDEAVNIAKKSISSFSKLYKKYWFNKMRAKLGLFTKKENDELLIEGLLSTMQKYEADFTNTFVSLTLNKFEDEKVFSSNEFKTWYALWKDRLKEENRPKEEVRNLMMNNNPYIIPRNHLVEEALKNAEKGDFTFMDNLLEALKNPYSYSKDLEKYTKLPEKSDIPYVTYCGT.

Residues Gly-94, Gly-96, Arg-97, Lys-117, Asp-129, Gly-130, Arg-180, and Arg-187 each coordinate ATP. Asp-256 functions as the Proton acceptor in the catalytic mechanism. Positions 257 and 266 each coordinate Mg(2+). Asp-266 provides a ligand contact to ATP.

It belongs to the SELO family. The cofactor is Mg(2+). Mn(2+) serves as cofactor.

The catalysed reaction is L-seryl-[protein] + ATP = 3-O-(5'-adenylyl)-L-seryl-[protein] + diphosphate. The enzyme catalyses L-threonyl-[protein] + ATP = 3-O-(5'-adenylyl)-L-threonyl-[protein] + diphosphate. It carries out the reaction L-tyrosyl-[protein] + ATP = O-(5'-adenylyl)-L-tyrosyl-[protein] + diphosphate. It catalyses the reaction L-histidyl-[protein] + UTP = N(tele)-(5'-uridylyl)-L-histidyl-[protein] + diphosphate. The catalysed reaction is L-seryl-[protein] + UTP = O-(5'-uridylyl)-L-seryl-[protein] + diphosphate. The enzyme catalyses L-tyrosyl-[protein] + UTP = O-(5'-uridylyl)-L-tyrosyl-[protein] + diphosphate. Functionally, nucleotidyltransferase involved in the post-translational modification of proteins. It can catalyze the addition of adenosine monophosphate (AMP) or uridine monophosphate (UMP) to a protein, resulting in modifications known as AMPylation and UMPylation. The chain is Protein nucleotidyltransferase YdiU from Clostridium perfringens (strain SM101 / Type A).